Reading from the N-terminus, the 202-residue chain is Peptidyl-tRNA hydrolase (202 aa).

Tyr17 contributes to the tRNA binding site. Catalysis depends on His22, which acts as the Proton acceptor. TRNA contacts are provided by Phe76, Asn78, and Asn124.

The protein belongs to the PTH family. In terms of assembly, monomer.

It is found in the cytoplasm. The catalysed reaction is an N-acyl-L-alpha-aminoacyl-tRNA + H2O = an N-acyl-L-amino acid + a tRNA + H(+). Functionally, hydrolyzes ribosome-free peptidyl-tRNAs (with 1 or more amino acids incorporated), which drop off the ribosome during protein synthesis, or as a result of ribosome stalling. Catalyzes the release of premature peptidyl moieties from peptidyl-tRNA molecules trapped in stalled 50S ribosomal subunits, and thus maintains levels of free tRNAs and 50S ribosomes. The protein is Peptidyl-tRNA hydrolase of Nitratidesulfovibrio vulgaris (strain DSM 19637 / Miyazaki F) (Desulfovibrio vulgaris).